A 166-amino-acid chain; its full sequence is Interferon gamma (166 aa).

A signal peptide spans 1–23; the sequence is MKYTSYILALQLCVLLGFSGSYG. The residue at position 24 (Gln24) is a Pyrrolidone carboxylic acid. N-linked (GlcNAc...) asparagine glycosylation is found at Asn39 and Asn106.

It belongs to the type II (or gamma) interferon family. In terms of assembly, homodimer. Interacts with IFNGR1 (via extracellular domain); this interaction promotes IFNGR1 dimerization. In terms of tissue distribution, released primarily from activated T lymphocytes.

The protein localises to the secreted. In terms of biological role, type II interferon produced by immune cells such as T-cells and NK cells that plays crucial roles in antimicrobial, antiviral, and antitumor responses by activating effector immune cells and enhancing antigen presentation. Primarily signals through the JAK-STAT pathway after interaction with its receptor IFNGR1 to affect gene regulation. Upon IFNG binding, IFNGR1 intracellular domain opens out to allow association of downstream signaling components JAK2, JAK1 and STAT1, leading to STAT1 activation, nuclear translocation and transcription of IFNG-regulated genes. Many of the induced genes are transcription factors such as IRF1 that are able to further drive regulation of a next wave of transcription. Plays a role in class I antigen presentation pathway by inducing a replacement of catalytic proteasome subunits with immunoproteasome subunits. In turn, increases the quantity, quality, and repertoire of peptides for class I MHC loading. Increases the efficiency of peptide generation also by inducing the expression of activator PA28 that associates with the proteasome and alters its proteolytic cleavage preference. Up-regulates as well MHC II complexes on the cell surface by promoting expression of several key molecules such as cathepsins B/CTSB, H/CTSH, and L/CTSL. Participates in the regulation of hematopoietic stem cells during development and under homeostatic conditions by affecting their development, quiescence, and differentiation. This is Interferon gamma (IFNG) from Cervus elaphus (Red deer).